We begin with the raw amino-acid sequence, 587 residues long: Envelope glycoprotein (587 aa).

The N-terminal stretch at 1–22 (MNFNHHFTWSLVIISQIFQVQA) is a signal peptide. Residues 23–527 (GFGDPREALL…TGFHGLLPYV (505 aa)) lie on the Extracellular side of the membrane. Asn120 and Asn237 each carry an N-linked (GlcNAc...) asparagine; by host glycan. The CXXC signature appears at 248–251 (CWLC). 3 disulfide bridges follow: Cys248–Cys251, Cys248–Cys484, and Cys476–Cys483. Asn266, Asn271, Asn277, Asn280, Asn295, Asn308, Asn322, Asn328, Asn340, and Asn358 each carry an N-linked (GlcNAc...) asparagine; by host glycan. The interval 399-419 (FIPLVIGLGITTAVSTGTAGL) is fusion peptide. Coiled coils occupy residues 420–470 (GVSL…LLTA) and 480–516 (QEKC…DNPF). An immunosuppression region spans residues 459–475 (LQNRRGLDLLTAEQGGI). A CX6CC motif is present at residues 476–484 (CLALQEKCC). N-linked (GlcNAc...) asparagine; by host glycosylation occurs at Asn488. The helical transmembrane segment at 528–548 (MPLLGPLLCLLLVLSFGPIIF) threads the bilayer. Over 549–587 (NKLMTFIKHQIESIQAKPIQVHYHRLEQEDHGGSYLNLT) the chain is Cytoplasmic. Positions 571 to 574 (YHRL) match the YXXL motif; contains endocytosis signal motif.

The mature envelope protein (Env) consists of a trimer of SU-TM heterodimers attached by a labile interchain disulfide bond. In terms of processing, specific enzymatic cleavages in vivo yield mature proteins. Envelope glycoproteins are synthesized as an inactive precursor that is N-glycosylated and processed likely by host cell furin or by a furin-like protease in the Golgi to yield the mature SU and TM proteins. The cleavage site between SU and TM requires the minimal sequence [KR]-X-[KR]-R. The R-peptide is released from the C-terminus of the cytoplasmic tail of the TM protein upon particle formation as a result of proteolytic cleavage by the viral protease. Cleavage of this peptide is required for TM to become fusogenic. Post-translationally, the CXXC motif is highly conserved across a broad range of retroviral envelope proteins. It is thought to participate in the formation of a labile disulfide bond possibly with the CX6CC motif present in the transmembrane protein. Isomerization of the intersubunit disulfide bond to an SU intrachain disulfide bond is thought to occur upon receptor recognition in order to allow membrane fusion.

The protein resides in the virion membrane. It is found in the host cell membrane. In terms of biological role, the surface protein (SU) attaches the virus to the host cell by binding to its receptor. This interaction triggers the refolding of the transmembrane protein (TM) and is thought to activate its fusogenic potential by unmasking its fusion peptide. Fusion occurs at the host cell plasma membrane. Its function is as follows. The transmembrane protein (TM) acts as a class I viral fusion protein. Under the current model, the protein has at least 3 conformational states: pre-fusion native state, pre-hairpin intermediate state, and post-fusion hairpin state. During viral and target cell membrane fusion, the coiled coil regions (heptad repeats) assume a trimer-of-hairpins structure, positioning the fusion peptide in close proximity to the C-terminal region of the ectodomain. The formation of this structure appears to drive apposition and subsequent fusion of viral and target cell membranes. Membranes fusion leads to delivery of the nucleocapsid into the cytoplasm. This Simian retrovirus SRV-1 protein is Envelope glycoprotein (env).